Consider the following 285-residue polypeptide: 4-diphosphocytidyl-2-C-methyl-D-erythritol kinase (285 aa).

Residue Lys-10 is part of the active site. 93-103 (PIGGGLGGGSS) contributes to the ATP binding site. Residue Asp-135 is part of the active site.

This sequence belongs to the GHMP kinase family. IspE subfamily.

The catalysed reaction is 4-CDP-2-C-methyl-D-erythritol + ATP = 4-CDP-2-C-methyl-D-erythritol 2-phosphate + ADP + H(+). It participates in isoprenoid biosynthesis; isopentenyl diphosphate biosynthesis via DXP pathway; isopentenyl diphosphate from 1-deoxy-D-xylulose 5-phosphate: step 3/6. In terms of biological role, catalyzes the phosphorylation of the position 2 hydroxy group of 4-diphosphocytidyl-2C-methyl-D-erythritol. In Vesicomyosocius okutanii subsp. Calyptogena okutanii (strain HA), this protein is 4-diphosphocytidyl-2-C-methyl-D-erythritol kinase.